The following is a 338-amino-acid chain: Glyceraldehyde-3-phosphate dehydrogenase 1 (338 aa).

NAD(+) is bound by residues 13–14 and G111; that span reads TI. D-glyceraldehyde 3-phosphate is bound at residue 140–142; the sequence is SCN. Residue C141 is the Nucleophile of the active site. Position 169 (R169) interacts with NAD(+). Residue 195-196 participates in D-glyceraldehyde 3-phosphate binding; that stretch reads HG. Q300 lines the NAD(+) pocket.

The protein belongs to the glyceraldehyde-3-phosphate dehydrogenase family. As to quaternary structure, homotetramer.

Its subcellular location is the cytoplasm. The enzyme catalyses D-glyceraldehyde 3-phosphate + phosphate + NADP(+) = (2R)-3-phospho-glyceroyl phosphate + NADPH + H(+). It catalyses the reaction D-glyceraldehyde 3-phosphate + phosphate + NAD(+) = (2R)-3-phospho-glyceroyl phosphate + NADH + H(+). It functions in the pathway carbohydrate degradation; glycolysis; pyruvate from D-glyceraldehyde 3-phosphate: step 1/5. The protein is Glyceraldehyde-3-phosphate dehydrogenase 1 of Methanosarcina barkeri (strain Fusaro / DSM 804).